The following is a 209-amino-acid chain: Large ribosomal subunit protein uL3 (209 aa).

The segment at 141 to 163 (RAVGSMGASSDPSRTFKNKRMPG) is disordered.

The protein belongs to the universal ribosomal protein uL3 family. Part of the 50S ribosomal subunit. Forms a cluster with proteins L14 and L19.

In terms of biological role, one of the primary rRNA binding proteins, it binds directly near the 3'-end of the 23S rRNA, where it nucleates assembly of the 50S subunit. The sequence is that of Large ribosomal subunit protein uL3 from Clostridium botulinum (strain Kyoto / Type A2).